A 146-amino-acid chain; its full sequence is Small ribosomal subunit protein bS16 (146 aa).

Residues 84-102 show a composition bias toward basic and acidic residues; the sequence is SHLEAQKAAVERLGRRKDY. The interval 84 to 146 is disordered; sequence SHLEAQKAAV…DAPAAEATTE (63 aa). Residues 110–119 are compositionally biased toward low complexity; it reads APKAAPVAEA. Acidic residues predominate over residues 120–130; sequence PAEEAPAEEPA. Low complexity predominate over residues 131 to 146; that stretch reads AEASTDDAPAAEATTE.

Belongs to the bacterial ribosomal protein bS16 family.

This chain is Small ribosomal subunit protein bS16, found in Rhodopirellula baltica (strain DSM 10527 / NCIMB 13988 / SH1).